A 355-amino-acid chain; its full sequence is GTPase Obg (355 aa).

The Obg domain occupies 1 to 159 (MKLVDEAEIL…RLLKLELKLL (159 aa)). Residues 160–342 (ADVGLLGFPN…IMKDVMAFFD (183 aa)) enclose the OBG-type G domain. Residues 166–173 (GFPNAGKS), 191–195 (FTTLY), 213–216 (DVPG), 292–295 (NKAD), and 323–325 (SAL) contribute to the GTP site. The Mg(2+) site is built by serine 173 and threonine 193.

The protein belongs to the TRAFAC class OBG-HflX-like GTPase superfamily. OBG GTPase family. Monomer. Mg(2+) is required as a cofactor.

The protein resides in the cytoplasm. In terms of biological role, an essential GTPase which binds GTP, GDP and possibly (p)ppGpp with moderate affinity, with high nucleotide exchange rates and a fairly low GTP hydrolysis rate. Plays a role in control of the cell cycle, stress response, ribosome biogenesis and in those bacteria that undergo differentiation, in morphogenesis control. This chain is GTPase Obg, found in Xanthomonas euvesicatoria pv. vesicatoria (strain 85-10) (Xanthomonas campestris pv. vesicatoria).